Here is a 206-residue protein sequence, read N- to C-terminus: LexA repressor (206 aa).

The H-T-H motif DNA-binding region spans 28–48 (VREIGEAVGLASSSTVHGHLA). Residues S128 and K166 each act as for autocatalytic cleavage activity in the active site.

The protein belongs to the peptidase S24 family. As to quaternary structure, homodimer.

It carries out the reaction Hydrolysis of Ala-|-Gly bond in repressor LexA.. In terms of biological role, represses a number of genes involved in the response to DNA damage (SOS response), including recA and lexA. In the presence of single-stranded DNA, RecA interacts with LexA causing an autocatalytic cleavage which disrupts the DNA-binding part of LexA, leading to derepression of the SOS regulon and eventually DNA repair. The polypeptide is LexA repressor (Bacillus pumilus (strain SAFR-032)).